The primary structure comprises 362 residues: tRNA/tmRNA (uracil-C(5))-methyltransferase (362 aa).

S-adenosyl-L-methionine is bound by residues Q186, Y214, N219, E235, and D295. C320 (nucleophile) is an active-site residue. E354 serves as the catalytic Proton acceptor.

This sequence belongs to the class I-like SAM-binding methyltransferase superfamily. RNA M5U methyltransferase family. TrmA subfamily.

The enzyme catalyses uridine(54) in tRNA + S-adenosyl-L-methionine = 5-methyluridine(54) in tRNA + S-adenosyl-L-homocysteine + H(+). It carries out the reaction uridine(341) in tmRNA + S-adenosyl-L-methionine = 5-methyluridine(341) in tmRNA + S-adenosyl-L-homocysteine + H(+). In terms of biological role, dual-specificity methyltransferase that catalyzes the formation of 5-methyluridine at position 54 (m5U54) in all tRNAs, and that of position 341 (m5U341) in tmRNA (transfer-mRNA). The sequence is that of tRNA/tmRNA (uracil-C(5))-methyltransferase from Stutzerimonas stutzeri (strain A1501) (Pseudomonas stutzeri).